A 717-amino-acid polypeptide reads, in one-letter code: Polyribonucleotide nucleotidyltransferase (717 aa).

Mg(2+) contacts are provided by Asp488 and Asp494. The region spanning 555-614 (PRIEVMNIPVDKIREVIGSGGKVIREIVEKTGAKINIDDDGTVKIASASAKEIEAARKWI) is the KH domain. The 69-residue stretch at 624-692 (GQVYEGTVVK…ERGKVRLSMK (69 aa)) folds into the S1 motif domain.

This sequence belongs to the polyribonucleotide nucleotidyltransferase family. Mg(2+) is required as a cofactor.

It localises to the cytoplasm. The catalysed reaction is RNA(n+1) + phosphate = RNA(n) + a ribonucleoside 5'-diphosphate. Functionally, involved in mRNA degradation. Catalyzes the phosphorolysis of single-stranded polyribonucleotides processively in the 3'- to 5'-direction. This is Polyribonucleotide nucleotidyltransferase from Rhizobium meliloti (strain 1021) (Ensifer meliloti).